A 99-amino-acid chain; its full sequence is Integration host factor subunit alpha (99 aa).

The disordered stretch occupies residues 49–75 (FGNFDLRDKNQRPGRNPKTGEDIPITA).

This sequence belongs to the bacterial histone-like protein family. As to quaternary structure, heterodimer of an alpha and a beta chain.

In terms of biological role, this protein is one of the two subunits of integration host factor, a specific DNA-binding protein that functions in genetic recombination as well as in transcriptional and translational control. The chain is Integration host factor subunit alpha from Salmonella arizonae (strain ATCC BAA-731 / CDC346-86 / RSK2980).